The following is a 209-amino-acid chain: Guanylate kinase (209 aa).

Residues 5 to 182 enclose the Guanylate kinase-like domain; that stretch reads GLLIVISGPS…AVTKINSIIV (178 aa). 12–19 is an ATP binding site; that stretch reads GPSGAGKG.

Belongs to the guanylate kinase family.

The protein localises to the cytoplasm. It catalyses the reaction GMP + ATP = GDP + ADP. Essential for recycling GMP and indirectly, cGMP. This Clostridium acetobutylicum (strain ATCC 824 / DSM 792 / JCM 1419 / IAM 19013 / LMG 5710 / NBRC 13948 / NRRL B-527 / VKM B-1787 / 2291 / W) protein is Guanylate kinase.